Here is a 117-residue protein sequence, read N- to C-terminus: Prefoldin subunit beta (117 aa).

It belongs to the prefoldin subunit beta family. Heterohexamer of two alpha and four beta subunits.

Its subcellular location is the cytoplasm. Molecular chaperone capable of stabilizing a range of proteins. Seems to fulfill an ATP-independent, HSP70-like function in archaeal de novo protein folding. The polypeptide is Prefoldin subunit beta (pfdB) (Pyrococcus abyssi (strain GE5 / Orsay)).